The following is a 320-amino-acid chain: GMP reductase (320 aa).

Cys174 serves as the catalytic Thioimidate intermediate. Ile203 to Cys226 provides a ligand contact to NADP(+).

It belongs to the IMPDH/GMPR family. GuaC type 2 subfamily.

The enzyme catalyses IMP + NH4(+) + NADP(+) = GMP + NADPH + 2 H(+). In terms of biological role, catalyzes the irreversible NADPH-dependent deamination of GMP to IMP. It functions in the conversion of nucleobase, nucleoside and nucleotide derivatives of G to A nucleotides, and in maintaining the intracellular balance of A and G nucleotides. The chain is GMP reductase from Mesoplasma florum (strain ATCC 33453 / NBRC 100688 / NCTC 11704 / L1) (Acholeplasma florum).